The primary structure comprises 213 residues: Putative 3-methyladenine DNA glycosylase (213 aa).

Residues 165–187 (GTPVPPDQVRNGPRTGVSGDGGV) are disordered.

The protein belongs to the DNA glycosylase MPG family.

The sequence is that of Putative 3-methyladenine DNA glycosylase from Streptomyces avermitilis (strain ATCC 31267 / DSM 46492 / JCM 5070 / NBRC 14893 / NCIMB 12804 / NRRL 8165 / MA-4680).